The primary structure comprises 361 residues: Phosphoserine aminotransferase (361 aa).

Position 43 (R43) interacts with L-glutamate. Pyridoxal 5'-phosphate-binding positions include 77 to 78 (AS), W103, T153, D173, and Q196. K197 bears the N6-(pyridoxal phosphate)lysine mark. 238–239 (NT) contributes to the pyridoxal 5'-phosphate binding site.

It belongs to the class-V pyridoxal-phosphate-dependent aminotransferase family. SerC subfamily. Homodimer. Pyridoxal 5'-phosphate serves as cofactor.

It localises to the cytoplasm. The enzyme catalyses O-phospho-L-serine + 2-oxoglutarate = 3-phosphooxypyruvate + L-glutamate. It carries out the reaction 4-(phosphooxy)-L-threonine + 2-oxoglutarate = (R)-3-hydroxy-2-oxo-4-phosphooxybutanoate + L-glutamate. It participates in amino-acid biosynthesis; L-serine biosynthesis; L-serine from 3-phospho-D-glycerate: step 2/3. The protein operates within cofactor biosynthesis; pyridoxine 5'-phosphate biosynthesis; pyridoxine 5'-phosphate from D-erythrose 4-phosphate: step 3/5. Its function is as follows. Catalyzes the reversible conversion of 3-phosphohydroxypyruvate to phosphoserine and of 3-hydroxy-2-oxo-4-phosphonooxybutanoate to phosphohydroxythreonine. This chain is Phosphoserine aminotransferase, found in Pseudomonas syringae pv. tomato (strain ATCC BAA-871 / DC3000).